The primary structure comprises 674 residues: DNA ligase (674 aa).

Residues 35-39 (DAEYD), 82-83 (SL), and E116 each bind NAD(+). Catalysis depends on K118, which acts as the N6-AMP-lysine intermediate. The NAD(+) site is built by R139, E174, K282, and K306. Zn(2+) contacts are provided by C400, C403, C418, and C424. A BRCT domain is found at 593 to 674 (SYVSLIHGKT…WLQYIQPNKV (82 aa)).

This sequence belongs to the NAD-dependent DNA ligase family. LigA subfamily. Requires Mg(2+) as cofactor. It depends on Mn(2+) as a cofactor.

It carries out the reaction NAD(+) + (deoxyribonucleotide)n-3'-hydroxyl + 5'-phospho-(deoxyribonucleotide)m = (deoxyribonucleotide)n+m + AMP + beta-nicotinamide D-nucleotide.. In terms of biological role, DNA ligase that catalyzes the formation of phosphodiester linkages between 5'-phosphoryl and 3'-hydroxyl groups in double-stranded DNA using NAD as a coenzyme and as the energy source for the reaction. It is essential for DNA replication and repair of damaged DNA. The protein is DNA ligase of Ehrlichia ruminantium (strain Welgevonden).